A 318-amino-acid polypeptide reads, in one-letter code: L-lactate dehydrogenase (318 aa).

The NAD(+) site is built by V15, D36, and K41. Position 89 (R89) interacts with substrate. NAD(+) is bound by residues S102, 119–121 (ITN), and T144. 121–124 (NPVD) is a binding site for substrate. 149–152 (DSAR) is a substrate binding site. The active-site Proton acceptor is the H176. T231 contacts substrate.

Belongs to the LDH/MDH superfamily. LDH family. Homotetramer.

The protein localises to the cytoplasm. The catalysed reaction is (S)-lactate + NAD(+) = pyruvate + NADH + H(+). Its pathway is fermentation; pyruvate fermentation to lactate; (S)-lactate from pyruvate: step 1/1. Catalyzes the conversion of lactate to pyruvate. This chain is L-lactate dehydrogenase, found in Fusobacterium nucleatum subsp. nucleatum (strain ATCC 25586 / DSM 15643 / BCRC 10681 / CIP 101130 / JCM 8532 / KCTC 2640 / LMG 13131 / VPI 4355).